A 186-amino-acid chain; its full sequence is Protein M2-1 (186 aa).

The segment at 1–28 (MSRRNPCKYEIRGHCLNGKKCHFSHNYF) adopts a C3H1-type zinc-finger fold. The oligomerization stretch occupies residues 32-49 (PHALLVRQNFMLNKILKS). Phosphoserine; by host is present on residues S58 and S61. Residues 76–171 (VIGVLESYLS…KNTIDIHNEI (96 aa)) are globular core. A binding to the phosphoprotein region spans residues 126-163 (RIYNTVISYIDSNKRNTKQTIHLLKRLPADVLKKTIKN).

It belongs to the pneumoviridae M2-1 protein family. As to quaternary structure, homotetramer. The homotetramer interacts with RNA. Interacts with the phosphoprotein (P); this interaction is required for protein M2-1 function, localization in host inclusion bodies. Formation of a complex host PP1/M2-1/P allows P to target host PP1 phosphatase to the M2-1 substrate. Interacts with the nucleoprotein (N). Interacts with the matrix protein (M); this interaction directs M localization to cytoplasmic inclusions comprising viral proteins L, N, P, and M2-1 and mediates M association with the nucleocapsid. Interacts with host PABPC1 (via C-terminus). Phosphorylated by host in infected cells. Only dephosphorylated M2-1 is competent for viral mRNA binding. Cyclic turnover of phosphorylation-dephosphorylation of M2-1 is required for efficient viral transcription.

Its subcellular location is the virion. It localises to the host cytoplasm. It is found in the host nucleus. In terms of biological role, acts as a tetrameric transcription processivity factor that binds in a competitive manner to RNA and the phosphoprotein (P) to prevent premature termination during transcription. Transcription anti-terminator that enhances readthrough of intergenic junctions during viral transcription. Preferentially binds to poly(A)-rich sequences. Plays a role in the association of the matrix protein with the nucleocapsid, which initiates assembly and budding. In Bos taurus (Bovine), this protein is Protein M2-1 (M2-1).